The sequence spans 426 residues: D-tagatose-1,6-bisphosphate aldolase subunit KbaZ (426 aa).

Belongs to the GatZ/KbaZ family. KbaZ subfamily. In terms of assembly, forms a complex with KbaY.

The protein operates within carbohydrate metabolism; D-tagatose 6-phosphate degradation; D-glyceraldehyde 3-phosphate and glycerone phosphate from D-tagatose 6-phosphate: step 2/2. Its function is as follows. Component of the tagatose-1,6-bisphosphate aldolase KbaYZ that is required for full activity and stability of the Y subunit. Could have a chaperone-like function for the proper and stable folding of KbaY. When expressed alone, KbaZ does not show any aldolase activity. This Escherichia coli (strain ATCC 8739 / DSM 1576 / NBRC 3972 / NCIMB 8545 / WDCM 00012 / Crooks) protein is D-tagatose-1,6-bisphosphate aldolase subunit KbaZ.